The following is a 509-amino-acid chain: ATP synthase subunit alpha (509 aa).

169 to 176 (GDRQTGKT) provides a ligand contact to ATP.

The protein belongs to the ATPase alpha/beta chains family. F-type ATPases have 2 components, CF(1) - the catalytic core - and CF(0) - the membrane proton channel. CF(1) has five subunits: alpha(3), beta(3), gamma(1), delta(1), epsilon(1). CF(0) has three main subunits: a(1), b(2) and c(9-12). The alpha and beta chains form an alternating ring which encloses part of the gamma chain. CF(1) is attached to CF(0) by a central stalk formed by the gamma and epsilon chains, while a peripheral stalk is formed by the delta and b chains.

It is found in the cell inner membrane. It carries out the reaction ATP + H2O + 4 H(+)(in) = ADP + phosphate + 5 H(+)(out). Produces ATP from ADP in the presence of a proton gradient across the membrane. The alpha chain is a regulatory subunit. This chain is ATP synthase subunit alpha, found in Methylorubrum populi (strain ATCC BAA-705 / NCIMB 13946 / BJ001) (Methylobacterium populi).